The following is a 295-amino-acid chain: Protease HtpX homolog (295 aa).

Transmembrane regions (helical) follow at residues 6-26 and 40-60; these read IGLFLLTNILVVVTISIVTSV and LSSLLVFCFLWGMGGAFVSLL. Histidine 148 contacts Zn(2+). The active site involves glutamate 149. Position 152 (histidine 152) interacts with Zn(2+). Helical transmembrane passes span 163-183 and 198-218; these read LIQGVVNAFVMFFSRIISYAL and IANIVLSILFSILGSIIVAYF. Position 223 (glutamate 223) interacts with Zn(2+).

The protein belongs to the peptidase M48B family. The cofactor is Zn(2+).

It is found in the cell inner membrane. This Leptospira interrogans serogroup Icterohaemorrhagiae serovar copenhageni (strain Fiocruz L1-130) protein is Protease HtpX homolog.